A 310-amino-acid polypeptide reads, in one-letter code: MEFKHISVLLNECLDALDIKDNGIYVDCTLGGAGHSSHILERLSNEGLLIGIDQDRDALKAAKERLKRFENVKYVHSNFYDIDNILQNLDIPKVDGILMDLGVSSYQLDEGARGFSYMKDAPLDMRMNRDNDFSAYEIVNEYSEDELYKIIRNYGEERFAKRISNCIVNRRSDKPIETTMELVDIIKAAIPAKARREGPHPAKRTFQAIRIEVNSELKILNQTIEDGVNRLKPGGRMAIITFHSLEDRIVKLKFRELNDPCTCPREFPMCICGKKPSVRLVSRKGIEPTKEEVEENPRSRSAKLRIIEKL.

S-adenosyl-L-methionine contacts are provided by residues 33–35, aspartate 53, phenylalanine 79, aspartate 100, and glutamine 107; that span reads AGH.

Belongs to the methyltransferase superfamily. RsmH family.

It localises to the cytoplasm. It carries out the reaction cytidine(1402) in 16S rRNA + S-adenosyl-L-methionine = N(4)-methylcytidine(1402) in 16S rRNA + S-adenosyl-L-homocysteine + H(+). Functionally, specifically methylates the N4 position of cytidine in position 1402 (C1402) of 16S rRNA. This chain is Ribosomal RNA small subunit methyltransferase H, found in Clostridium botulinum (strain Alaska E43 / Type E3).